A 428-amino-acid polypeptide reads, in one-letter code: Nucleotidyltransferase MB21D2 (428 aa).

Residues 366-389 form a disordered region; the sequence is QRRGSTTSIPSPQSDGGDPNQPDD. A compositionally biased stretch (polar residues) spans 368–379; sequence RGSTTSIPSPQS. Phosphothreonine is present on T372. 3 positions are modified to phosphoserine: S373, S376, and S379.

This sequence belongs to the mab-21 family.

Functionally, probable nucleotidyltransferase that catalyzes the formation of cyclic dinucleotide second messenger in response to some unknown stimulus. This chain is Nucleotidyltransferase MB21D2, found in Mus musculus (Mouse).